A 693-amino-acid chain; its full sequence is Tegument protein UL47 (693 aa).

Disordered regions lie at residues 1–32 and 48–126; these read MSAREPAGRRRRASTRPRASPVADEPAGDGVG and ELEA…GYLG. A compositionally biased stretch (acidic residues) spans 48–57; sequence ELEALEEMAG. The tract at residues 50–75 is RNA-binding; that stretch reads EALEEMAGDEPPVRRRREGPRARRRR. Positions 63-75 match the Nuclear localization signal motif; sequence RRRREGPRARRRR. Residues 63-75 are compositionally biased toward basic residues; it reads RRRREGPRARRRR. Residues 647–670 carry the Nuclear export signal motif; sequence SVLGPGVRVVDIMSQFRKLLMGDE.

This sequence belongs to the alphaherpesvirinae HHV-1 UL47 family. As to quaternary structure, interacts with US3 kinase. Interacts with UL31 and UL34; these interactions seem important for efficient virion nuclear egress. Interacts with UL41/VHS. Post-translationally, phosphorylated by US3. This phosphorylation is required for proper nuclear localization.

The protein localises to the virion tegument. Its subcellular location is the host nucleus. The protein resides in the host cytoplasm. Functionally, tegument protein that can bind to various RNA transcripts. Plays a role in the attenuation of selective viral and cellular mRNA degradation by modulating the activity of host shutoff RNase UL41/VHS. Also plays a role in the primary envelopment of virions in the perinuclear space, probably by interacting with two nuclear egress proteins UL31 and UL34. The protein is Tegument protein UL47 of Human herpesvirus 1 (strain F) (HHV-1).